Here is a 562-residue protein sequence, read N- to C-terminus: Urocanate hydratase (562 aa).

NAD(+) is bound by residues 52–53, Gln130, 176–178, Glu196, Arg201, 242–243, 263–267, 273–274, and Tyr322; these read GG, GMG, NA, QTSAH, and YL. Residue Cys410 is part of the active site. Gly492 serves as a coordination point for NAD(+).

Belongs to the urocanase family. It depends on NAD(+) as a cofactor.

Its subcellular location is the cytoplasm. The catalysed reaction is 4-imidazolone-5-propanoate = trans-urocanate + H2O. It participates in amino-acid degradation; L-histidine degradation into L-glutamate; N-formimidoyl-L-glutamate from L-histidine: step 2/3. Catalyzes the conversion of urocanate to 4-imidazolone-5-propionate. The protein is Urocanate hydratase of Klebsiella pneumoniae subsp. pneumoniae (strain ATCC 700721 / MGH 78578).